The primary structure comprises 560 residues: Kinesin light chain 1 (560 aa).

Residues 27 to 156 (KTKQVIQGLE…HLEFMNQLKK (130 aa)) adopt a coiled-coil conformation. Positions 156–176 (KYDDDISPSEDKDSDSSKEPL) are enriched in basic and acidic residues. Residues 156–203 (KYDDDISPSEDKDSDSSKEPLDDLFPNDEDDPGQGIQQQHSSAAAAAQ) form a disordered region. Position 162 is a phosphoserine (serine 162). The span at 188–203 (GQGIQQQHSSAAAAAQ) shows a compositional bias: low complexity. TPR repeat units follow at residues 213–246 (LRTL…LEKT), 255–288 (ATML…REKT), 297–330 (AATL…REKV), 339–372 (AKQL…YQTK), and 381–414 (AKTK…AHER). Residue tyrosine 449 is modified to Phosphotyrosine. Residue serine 460 is modified to Phosphoserine. The TPR 6 repeat unit spans residues 464–497 (TTTLKNLGALYRRQGKFEAAETLEEAALRSRKQG). Phosphoserine occurs at positions 521 and 524.

It belongs to the kinesin light chain family. Oligomeric complex composed of two heavy chains and two light chains. Interacts with SPAG9. Interacts with ATCAY; may link mitochondria to KLC1 and regulate mitochondria localization into neuron projections. Interacts (via TPR repeats) with TOR1A; the interaction associates TOR1A with the kinesin oligomeric complex. Interacts with BORCS5. Interacts with MAPK8IP3/JIP3 and NTRK2/TRKB; interaction with NTRK2/TRKB is mediated by MAPK8IP3/JIP3. Interacts with CLSTN1; phosphorylation at Ser-460 inhibits interaction with CLSTN1. Post-translationally, phosphorylation at Ser-460 by ERK inhibits interaction with CLSTN1 and localization to cytoplasmic vesicles. In terms of tissue distribution, expressed in brain (at protein level).

It localises to the cell projection. It is found in the growth cone. The protein resides in the cytoplasmic vesicle. Its subcellular location is the cytoplasm. The protein localises to the cytoskeleton. Functionally, kinesin is a microtubule-associated force-producing protein that may play a role in organelle transport. The light chain may function in coupling of cargo to the heavy chain or in the modulation of its ATPase activity. The sequence is that of Kinesin light chain 1 (Klc1) from Rattus norvegicus (Rat).